Reading from the N-terminus, the 574-residue chain is Proline--tRNA ligase (574 aa).

The protein belongs to the class-II aminoacyl-tRNA synthetase family. ProS type 1 subfamily. Homodimer.

It is found in the cytoplasm. It carries out the reaction tRNA(Pro) + L-proline + ATP = L-prolyl-tRNA(Pro) + AMP + diphosphate. Catalyzes the attachment of proline to tRNA(Pro) in a two-step reaction: proline is first activated by ATP to form Pro-AMP and then transferred to the acceptor end of tRNA(Pro). As ProRS can inadvertently accommodate and process non-cognate amino acids such as alanine and cysteine, to avoid such errors it has two additional distinct editing activities against alanine. One activity is designated as 'pretransfer' editing and involves the tRNA(Pro)-independent hydrolysis of activated Ala-AMP. The other activity is designated 'posttransfer' editing and involves deacylation of mischarged Ala-tRNA(Pro). The misacylated Cys-tRNA(Pro) is not edited by ProRS. This Desulfovibrio desulfuricans (strain ATCC 27774 / DSM 6949 / MB) protein is Proline--tRNA ligase.